We begin with the raw amino-acid sequence, 449 residues long: Putative gustatory receptor 77a (449 aa).

Over 1–27 (MPLPLGDPLALAVSPQLGYIRITAMPR) the chain is Cytoplasmic. Residues 28–50 (WLQLPGMSALGILYSLTRVFGLM) traverse the membrane as a helical segment. The Extracellular portion of the chain corresponds to 51–70 (ATANWSPRGIKRVRQSLYLR). The helical transmembrane segment at 71-93 (IHGCVMLIFVGCFSPFAFWCIFQ) threads the bilayer. Topologically, residues 94 to 102 (RMAFLRQNR) are cytoplasmic. A helical transmembrane segment spans residues 103–125 (ILLMIGFNRYVLLLVCAFMTLWI). Over 126–205 (HCFKQAEIIG…VRRNFMYACS (80 aa)) the chain is Extracellular. The helical transmembrane segment at 206–228 (LVFVSVCQAILQLSLGMYTMAIL) threads the bilayer. Over 229–298 (FLGHLVRHSN…LLKLHRSICS (70 aa)) the chain is Cytoplasmic. A helical transmembrane segment spans residues 299–321 (LCAVQAVCFLGFVPLECTIHLFF). Over 322 to 340 (TYFMKYSKFILRKYGRSFP) the chain is Extracellular. The chain crosses the membrane as a helical span at residues 341–363 (LNYFAIAFLVGLFTNLLLVILPT). Residues 364 to 420 (YYSERRFNCTREIIKGGGLAFPSRITVKQLRHTMHFYGLYLKNVEHVFAVSACGLFK) are Cytoplasmic-facing. Residues 421-443 (LNNAILFCIVGAILEYLMILIQF) form a helical membrane-spanning segment. The Extracellular portion of the chain corresponds to 444–449 (DKVLNK).

The protein belongs to the insect chemoreceptor superfamily. Gustatory receptor (GR) family. Gr77a subfamily. In terms of tissue distribution, in larvae, is expressed in dorsal pharyngeal sense organ.

The protein resides in the cell membrane. In terms of biological role, probable gustatory receptor which mediates acceptance or avoidance behavior, depending on its substrates. This is Putative gustatory receptor 77a (Gr77a) from Drosophila melanogaster (Fruit fly).